The chain runs to 67 residues: Large ribosomal subunit protein bL35 (67 aa).

This sequence belongs to the bacterial ribosomal protein bL35 family.

The polypeptide is Large ribosomal subunit protein bL35 (Acidiphilium cryptum (strain JF-5)).